The following is a 523-amino-acid chain: Leucine-rich repeat transmembrane neuronal protein 1 (523 aa).

Positions Met1–Ala34 are cleaved as a signal peptide. Positions Ala35–Asn63 constitute an LRRNT domain. At Ala35–Lys428 the chain is on the extracellular side. N-linked (GlcNAc...) asparagine glycosylation is found at Asn56 and Asn63. 10 LRR repeats span residues Leu64–Gly87, Met89–Lys111, Leu112–Pro135, Met136–Gly159, Arg161–Asp183, Cys184–Gly207, Phe209–Arg231, Ile233–Val255, Trp256–Thr278, and Pro280–Ser302. Asn130 carries N-linked (GlcNAc...) asparagine glycosylation. The LRRCT domain maps to Asn314–Asp365. Residue Asn381 is glycosylated (N-linked (GlcNAc...) asparagine). The chain crosses the membrane as a helical span at residues Val429–Val449. At Ser450 to Val523 the chain is on the cytoplasmic side. A May be involved in DLG4-binding motif is present at residues Glu520–Val523.

The protein belongs to the LRRTM family. In terms of assembly, interacts with DLG4.

The protein localises to the cell membrane. Its subcellular location is the postsynaptic cell membrane. Its function is as follows. Exhibits strong synaptogenic activity, restricted to excitatory presynaptic differentiation, acting at both pre- and postsynaptic level. This Rattus norvegicus (Rat) protein is Leucine-rich repeat transmembrane neuronal protein 1 (Lrrtm1).